The sequence spans 185 residues: ATP-dependent protease subunit HslV (185 aa).

T13 is a catalytic residue. G167, C170, and T173 together coordinate Na(+).

Belongs to the peptidase T1B family. HslV subfamily. In terms of assembly, a double ring-shaped homohexamer of HslV is capped on each side by a ring-shaped HslU homohexamer. The assembly of the HslU/HslV complex is dependent on binding of ATP.

The protein resides in the cytoplasm. The catalysed reaction is ATP-dependent cleavage of peptide bonds with broad specificity.. With respect to regulation, allosterically activated by HslU binding. In terms of biological role, protease subunit of a proteasome-like degradation complex believed to be a general protein degrading machinery. The chain is ATP-dependent protease subunit HslV from Sinorhizobium fredii (strain NBRC 101917 / NGR234).